Consider the following 421-residue polypeptide: Replication factor C large subunit (421 aa).

63–70 (GPPGIGKT) serves as a coordination point for ATP.

It belongs to the activator 1 small subunits family. RfcL subfamily. In terms of assembly, heteromultimer composed of small subunits (RfcS) and large subunits (RfcL).

In terms of biological role, part of the RFC clamp loader complex which loads the PCNA sliding clamp onto DNA. In Pyrobaculum calidifontis (strain DSM 21063 / JCM 11548 / VA1), this protein is Replication factor C large subunit.